The chain runs to 468 residues: 3-isopropylmalate dehydratase large subunit (468 aa).

Residues Cys-349, Cys-409, and Cys-412 each coordinate [4Fe-4S] cluster.

This sequence belongs to the aconitase/IPM isomerase family. LeuC type 1 subfamily. Heterodimer of LeuC and LeuD. [4Fe-4S] cluster serves as cofactor.

The catalysed reaction is (2R,3S)-3-isopropylmalate = (2S)-2-isopropylmalate. It participates in amino-acid biosynthesis; L-leucine biosynthesis; L-leucine from 3-methyl-2-oxobutanoate: step 2/4. Functionally, catalyzes the isomerization between 2-isopropylmalate and 3-isopropylmalate, via the formation of 2-isopropylmaleate. The polypeptide is 3-isopropylmalate dehydratase large subunit (Shewanella baltica (strain OS223)).